Here is a 277-residue protein sequence, read N- to C-terminus: 2-dehydro-3-deoxyphosphooctonate aldolase (277 aa).

The protein belongs to the KdsA family.

Its subcellular location is the cytoplasm. The catalysed reaction is D-arabinose 5-phosphate + phosphoenolpyruvate + H2O = 3-deoxy-alpha-D-manno-2-octulosonate-8-phosphate + phosphate. It participates in carbohydrate biosynthesis; 3-deoxy-D-manno-octulosonate biosynthesis; 3-deoxy-D-manno-octulosonate from D-ribulose 5-phosphate: step 2/3. The protein operates within bacterial outer membrane biogenesis; lipopolysaccharide biosynthesis. The chain is 2-dehydro-3-deoxyphosphooctonate aldolase from Brucella anthropi (strain ATCC 49188 / DSM 6882 / CCUG 24695 / JCM 21032 / LMG 3331 / NBRC 15819 / NCTC 12168 / Alc 37) (Ochrobactrum anthropi).